We begin with the raw amino-acid sequence, 323 residues long: Transaldolase (323 aa).

The active-site Schiff-base intermediate with substrate is Lys133.

The protein belongs to the transaldolase family. Type 1 subfamily. In terms of assembly, monomer.

The catalysed reaction is D-sedoheptulose 7-phosphate + D-glyceraldehyde 3-phosphate = D-erythrose 4-phosphate + beta-D-fructose 6-phosphate. The protein operates within carbohydrate degradation; pentose phosphate pathway; D-glyceraldehyde 3-phosphate and beta-D-fructose 6-phosphate from D-ribose 5-phosphate and D-xylulose 5-phosphate (non-oxidative stage): step 2/3. Functionally, important for the balance of metabolites in the pentose-phosphate pathway. Involved in xylose fermentation to ethanol. This chain is Transaldolase, found in Gibberella intermedia (Bulb rot disease fungus).